The sequence spans 374 residues: Ribosomal RNA large subunit methyltransferase G (374 aa).

It belongs to the methyltransferase superfamily. RlmG family.

It is found in the cytoplasm. It catalyses the reaction guanosine(1835) in 23S rRNA + S-adenosyl-L-methionine = N(2)-methylguanosine(1835) in 23S rRNA + S-adenosyl-L-homocysteine + H(+). Specifically methylates the guanine in position 1835 (m2G1835) of 23S rRNA. This is Ribosomal RNA large subunit methyltransferase G from Pseudomonas aeruginosa (strain ATCC 15692 / DSM 22644 / CIP 104116 / JCM 14847 / LMG 12228 / 1C / PRS 101 / PAO1).